The following is an 894-amino-acid chain: Bifunctional enzyme RhaA/RhaB (894 aa).

The rhamnulokinase stretch occupies residues 1–465 (MGEYRLAVDI…TAFPVTYFLP (465 aa)). The segment at 466-894 (QRSESHVSSR…KRESEKAKQR (429 aa)) is L-rhamnose isomerase. Mn(2+) contacts are provided by histidine 730, aspartate 762, and aspartate 764.

It in the N-terminal section; belongs to the rhamnulokinase family. In the C-terminal section; belongs to the rhamnose isomerase family. Requires Mn(2+) as cofactor.

It is found in the cytoplasm. It catalyses the reaction L-rhamnulose + ATP = L-rhamnulose 1-phosphate + ADP + H(+). The enzyme catalyses L-rhamnopyranose = L-rhamnulose. The protein operates within carbohydrate degradation; L-rhamnose degradation; glycerone phosphate from L-rhamnose: step 1/3. It participates in carbohydrate degradation; L-rhamnose degradation; glycerone phosphate from L-rhamnose: step 2/3. This Shouchella clausii (strain KSM-K16) (Alkalihalobacillus clausii) protein is Bifunctional enzyme RhaA/RhaB (rhaAB).